The chain runs to 244 residues: Flavin-dependent thymidylate synthase (244 aa).

Positions 2 to 207 (VRVTLVNYTK…DIRPIIKWAK (206 aa)) constitute a ThyX domain. Residues S56, 80–82 (RHR), and Q88 contribute to the FAD site. DUMP-binding positions include 77 to 80 (QLVR), 88 to 92 (QQSQR), and R146. A ThyX motif motif is present at residues 80-90 (RHRIASYTQQS). FAD-binding positions include 162–164 (NLR) and H168. Position 173 (R173) interacts with dUMP. R173 functions as the Involved in ionization of N3 of dUMP, leading to its activation in the catalytic mechanism.

Belongs to the thymidylate synthase ThyX family. In terms of assembly, homotetramer. The cofactor is FAD.

The catalysed reaction is dUMP + (6R)-5,10-methylene-5,6,7,8-tetrahydrofolate + NADPH + H(+) = dTMP + (6S)-5,6,7,8-tetrahydrofolate + NADP(+). It participates in pyrimidine metabolism; dTTP biosynthesis. In terms of biological role, catalyzes the reductive methylation of 2'-deoxyuridine-5'-monophosphate (dUMP) to 2'-deoxythymidine-5'-monophosphate (dTMP) while utilizing 5,10-methylenetetrahydrofolate (mTHF) as the methyl donor, and NADPH and FADH(2) as the reductant. The polypeptide is Flavin-dependent thymidylate synthase (Pyrococcus furiosus (strain ATCC 43587 / DSM 3638 / JCM 8422 / Vc1)).